The chain runs to 428 residues: Aspartic protease 10 (428 aa).

The N-terminal stretch at 1–16 (MKTFIALLALLTVVSA) is a signal peptide. Positions 72–425 (YMVQISLGSP…DMKSGRLGLA (354 aa)) constitute a Peptidase A1 domain. Aspartate 90 is an active-site residue. Asparagine 155 and asparagine 191 each carry an N-linked (GlcNAc...) asparagine glycan. Residue aspartate 318 is part of the active site. Cysteine 353 and cysteine 385 are oxidised to a cystine.

Belongs to the peptidase A1 family. Proteolytically cleaved. As to expression, synthesized in the intestine. When secreted in low heme conditions, localizes to neurons near the anterior and posterior regions of the body and in coelomocytes.

It localises to the secreted. Its function is as follows. Aspartic protease which plays a role in heme homeostasis and mediates inter-organ signaling between the intestine and extra-intestinal tissues when cellular heme levels are low. The chain is Aspartic protease 10 from Caenorhabditis elegans.